The chain runs to 337 residues: Acetyl-coenzyme A synthetase (337 aa).

CoA contacts are provided by residues 131–134, Thr249, and Asn273; that span reads RGGR. 325–327 provides a ligand contact to ATP; sequence GEP.

The protein belongs to the ATP-dependent AMP-binding enzyme family. It depends on Mg(2+) as a cofactor. Post-translationally, acetylated. Deacetylation by the SIR2-homolog deacetylase activates the enzyme.

The enzyme catalyses acetate + ATP + CoA = acetyl-CoA + AMP + diphosphate. Functionally, catalyzes the conversion of acetate into acetyl-CoA (AcCoA), an essential intermediate at the junction of anabolic and catabolic pathways. AcsA undergoes a two-step reaction. In the first half reaction, AcsA combines acetate with ATP to form acetyl-adenylate (AcAMP) intermediate. In the second half reaction, it can then transfer the acetyl group from AcAMP to the sulfhydryl group of CoA, forming the product AcCoA. The chain is Acetyl-coenzyme A synthetase (acsA) from Nostoc linckia.